A 138-amino-acid chain; its full sequence is MEGELIENNGLDIYDTSETPKKRGRPAKYNEKIATQIVLLVSEGYSLRKISMMPGMPSHRQMMRWQLEHMDFREGIAWMSWLWCAEAGRRAVEIIDEVDINAEDGPKQLRKAEAKAKALLAAAKLNSLKHSPFGDDKQ.

The disordered stretch occupies residues 1–27; sequence MEGELIENNGLDIYDTSETPKKRGRPA.

This is an uncharacterized protein from Escherichia coli (strain K12).